Reading from the N-terminus, the 507-residue chain is RNA-binding protein MEX3B (507 aa).

Residues 1-22 (MPSSLFADMERNGSGGGGGETL) form a disordered region. KH domains follow at residues 59-120 (MTEC…RREI) and 155-216 (QTTI…REEI). Disordered regions lie at residues 256-279 (NQSS…LGSA) and 426-450 (SSSS…GMRR). Over residues 426–446 (SSSSSSSSSSSSSSSSSSSSS) the composition is skewed to low complexity. Residues 456 to 496 (CSICFESEVIAALVPCGHNLFCMECANRICEKNQPQCPVCH) form an RING-type zinc finger.

Its subcellular location is the cytoplasm. The protein resides in the nucleus. It is found in the cytoplasmic granule. It localises to the P-body. RNA-binding protein. May be involved in post-transcriptional regulatory mechanisms. This Xenopus laevis (African clawed frog) protein is RNA-binding protein MEX3B (mex3b).